The following is a 260-amino-acid chain: Acetylglutamate kinase (260 aa).

Residues 46–47 (GG), R68, and N160 each bind substrate.

This sequence belongs to the acetylglutamate kinase family. ArgB subfamily.

It is found in the cytoplasm. It catalyses the reaction N-acetyl-L-glutamate + ATP = N-acetyl-L-glutamyl 5-phosphate + ADP. The protein operates within amino-acid biosynthesis; L-arginine biosynthesis; N(2)-acetyl-L-ornithine from L-glutamate: step 2/4. Its function is as follows. Catalyzes the ATP-dependent phosphorylation of N-acetyl-L-glutamate. This Shewanella sp. (strain MR-4) protein is Acetylglutamate kinase.